The sequence spans 1379 residues: DNA-directed RNA polymerase subunit beta'' (1379 aa).

The Zn(2+) site is built by Cys-220, Cys-291, Cys-298, and Cys-301.

This sequence belongs to the RNA polymerase beta' chain family. RpoC2 subfamily. In terms of assembly, in plastids the minimal PEP RNA polymerase catalytic core is composed of four subunits: alpha, beta, beta', and beta''. When a (nuclear-encoded) sigma factor is associated with the core the holoenzyme is formed, which can initiate transcription. It depends on Zn(2+) as a cofactor.

It is found in the plastid. The enzyme catalyses RNA(n) + a ribonucleoside 5'-triphosphate = RNA(n+1) + diphosphate. Its function is as follows. DNA-dependent RNA polymerase catalyzes the transcription of DNA into RNA using the four ribonucleoside triphosphates as substrates. This Cuscuta reflexa (Southern Asian dodder) protein is DNA-directed RNA polymerase subunit beta''.